A 173-amino-acid chain; its full sequence is Shikimate kinase 1 (173 aa).

14 to 19 (GAGKST) serves as a coordination point for ATP. Position 18 (S18) interacts with Mg(2+). Substrate-binding residues include D36, R60, and G82. R120 contributes to the ATP binding site. R140 serves as a coordination point for substrate. ATP is bound at residue Q157.

Belongs to the shikimate kinase family. Monomer. Mg(2+) is required as a cofactor.

The protein resides in the cytoplasm. The enzyme catalyses shikimate + ATP = 3-phosphoshikimate + ADP + H(+). Its pathway is metabolic intermediate biosynthesis; chorismate biosynthesis; chorismate from D-erythrose 4-phosphate and phosphoenolpyruvate: step 5/7. Catalyzes the specific phosphorylation of the 3-hydroxyl group of shikimic acid using ATP as a cosubstrate. The chain is Shikimate kinase 1 from Escherichia fergusonii (strain ATCC 35469 / DSM 13698 / CCUG 18766 / IAM 14443 / JCM 21226 / LMG 7866 / NBRC 102419 / NCTC 12128 / CDC 0568-73).